Reading from the N-terminus, the 403-residue chain is Leu/Ile/Val-binding protein homolog 8 (403 aa).

The first 26 residues, 1-26 (MRLSRLLIGASLGVALSSTAFTAALA), serve as a signal peptide directing secretion.

It belongs to the leucine-binding protein family.

Component of an amino-acid transport system. The chain is Leu/Ile/Val-binding protein homolog 8 from Brucella suis biovar 1 (strain 1330).